A 229-amino-acid chain; its full sequence is 2,3-bisphosphoglycerate-dependent phosphoglycerate mutase (229 aa).

Substrate-binding positions include 7–14, 20–21, Arg-59, 86–89, Lys-97, 113–114, and 182–183; these read RHGQSEWN, TG, ERHY, RR, and GN. His-8 acts as the Tele-phosphohistidine intermediate in catalysis. Glu-86 functions as the Proton donor/acceptor in the catalytic mechanism.

The protein belongs to the phosphoglycerate mutase family. BPG-dependent PGAM subfamily.

The enzyme catalyses (2R)-2-phosphoglycerate = (2R)-3-phosphoglycerate. It functions in the pathway carbohydrate degradation; glycolysis; pyruvate from D-glyceraldehyde 3-phosphate: step 3/5. Catalyzes the interconversion of 2-phosphoglycerate and 3-phosphoglycerate. This Listeria welshimeri serovar 6b (strain ATCC 35897 / DSM 20650 / CCUG 15529 / CIP 8149 / NCTC 11857 / SLCC 5334 / V8) protein is 2,3-bisphosphoglycerate-dependent phosphoglycerate mutase.